Here is a 356-residue protein sequence, read N- to C-terminus: Tyrosine recombinase XerS (356 aa).

The 106-residue stretch at 16-121 (IMPWYVLDYY…ALSSLYKYLT (106 aa)) folds into the Core-binding (CB) domain. The Tyr recombinase domain maps to 169-354 (AFLDYVDKEY…VNDEQKNALD (186 aa)). Residues R210, K234, H306, R309, and H332 contribute to the active site. Residue Y341 is the O-(3'-phospho-DNA)-tyrosine intermediate of the active site.

The protein belongs to the 'phage' integrase family. XerS subfamily.

It is found in the cytoplasm. With respect to regulation, ftsK is required for recombination. Functionally, site-specific tyrosine recombinase, which acts by catalyzing the cutting and rejoining of the recombining DNA molecules. Essential to convert dimers of the bacterial chromosome into monomers to permit their segregation at cell division. This Streptococcus pyogenes serotype M1 protein is Tyrosine recombinase XerS.